A 514-amino-acid polypeptide reads, in one-letter code: Membrane-bound lytic murein transglycosylase F (514 aa).

The first 30 residues, 1–30 (MKKLKINYLFIGILTLLLAAALWPSIPWFG), serve as a signal peptide directing secretion. A non-LT domain region spans residues 31 to 269 (KTENHVAAIQ…RIEEKYLGHG (239 aa)). The LT domain stretch occupies residues 270–514 (DDFDYVDTRS…LFTPQKKEEK (245 aa)). Glu-314 is an active-site residue.

In the N-terminal section; belongs to the bacterial solute-binding protein 3 family. This sequence in the C-terminal section; belongs to the transglycosylase Slt family.

It localises to the cell outer membrane. The catalysed reaction is Exolytic cleavage of the (1-&gt;4)-beta-glycosidic linkage between N-acetylmuramic acid (MurNAc) and N-acetylglucosamine (GlcNAc) residues in peptidoglycan, from either the reducing or the non-reducing ends of the peptidoglycan chains, with concomitant formation of a 1,6-anhydrobond in the MurNAc residue.. In terms of biological role, murein-degrading enzyme that degrades murein glycan strands and insoluble, high-molecular weight murein sacculi, with the concomitant formation of a 1,6-anhydromuramoyl product. Lytic transglycosylases (LTs) play an integral role in the metabolism of the peptidoglycan (PG) sacculus. Their lytic action creates space within the PG sacculus to allow for its expansion as well as for the insertion of various structures such as secretion systems and flagella. This chain is Membrane-bound lytic murein transglycosylase F, found in Salmonella arizonae (strain ATCC BAA-731 / CDC346-86 / RSK2980).